The chain runs to 293 residues: MIAVLMGGNSAERAVSLKSGEAVYQALINQNINCFEFDWHGYNLSELWQQEFDQAFIVLHGRGGEDGYIQKQLENRCIRYTGSDSNASHNGIDKARTKIIWKQHNLTLAPSIVASIHKPIEPIDFPLPWMVKPTLEGSSIGISKVDSQIQLNNALMLAWQYNSHALIEQWIEGDEYTVAILGDKALPVVKIITDQGFYDYESKYHSNKIQYLCPCGLSSSQEQVLQVIALKAFFAINAKGWGRVDFIINQHNKPYLLEINTVPGMTSHSLVPMAAKAMGMSFNKLVVAIINEI.

Residues 98-291 (KIIWKQHNLT…FNKLVVAIIN (194 aa)) enclose the ATP-grasp domain. An ATP-binding site is contributed by 124–177 (DFPLPWMVKPTLEGSSIGISKVDSQIQLNNALMLAWQYNSHALIEQWIEGDEYT). Mg(2+)-binding residues include Asp245, Glu258, and Asn260.

This sequence belongs to the D-alanine--D-alanine ligase family. Mg(2+) is required as a cofactor. Mn(2+) serves as cofactor.

The protein resides in the cytoplasm. The enzyme catalyses 2 D-alanine + ATP = D-alanyl-D-alanine + ADP + phosphate + H(+). It participates in cell wall biogenesis; peptidoglycan biosynthesis. Its function is as follows. Cell wall formation. This chain is D-alanine--D-alanine ligase, found in Ruthia magnifica subsp. Calyptogena magnifica.